Here is a 510-residue protein sequence, read N- to C-terminus: Cytochrome P450 monooxygenase macH (510 aa).

A helical transmembrane segment spans residues Leu-7–Tyr-29. A heme-binding site is contributed by Cys-454.

The protein belongs to the cytochrome P450 family. The cofactor is heme.

It is found in the membrane. Its pathway is secondary metabolite biosynthesis; terpenoid biosynthesis. Its function is as follows. Cytochrome P450 monooxygenase; part of the gene cluster that mediates the biosynthesis of macrophorins, isoprenoid epoxycyclohexenones containing cyclized drimane moieties. The first step of the pathway is the synthesis of 6-methylsalicylic acid (6-MSA) by the polyketide synthase macA. 6-MSA is then converted to m-cresol by the decarboxylase macB. The cytochrome P450 monooxygenase macC then catalyzes the oxidation of m-cresol to toluquinol. Epoxidation of toluquinol is then performed by the short chain dehydrogenase macD, with the help of macE, and a further prenylation by macG leads to 7-deacetoxyyanuthone A. The next step is the hydroxylation of C-22 of 7-deacetoxyyanuthone A by the cytochrome P450 monooxygenase macH to yield 22-deacetylyanuthone A. O-Mevalon transferase macI then attaches mevalon to the hydroxyl group of 22-deacetylyanuthone A to produce yanuthone E. The terpene cyclase macJ catalyzes the cyclization of 22-deacetylyanuthone A to macrophorin A. MacJ is also able to catalyze cyclization of yanuthone E and 7-deacetoxyyanuthone A to their corresponding macrophorins. The macJ products can be further modified by macH and macJ, as well as by the FAD-dependent monooxygenase macF, to produce additional macrophorins, including 4'-oxomacrophorin A, 4'-oxomacrophorin D and 4'-oxomacrophorin E. This Penicillium terrestre protein is Cytochrome P450 monooxygenase macH.